The chain runs to 448 residues: MKKTLRFAAVASGLVASLITVAPSASAQALRAQGASLADEVVAVVNNDVITGRELDQRVGLIARRLQQQKAPVPPTDQLRAQVLNQMVLERIQVQRAKDDGIVVDNATVQATLGRLAQANGMQLDQYKARIEAQGVPWDLFVRDARTELMLSKLREKEVDSKITVSDAEVASYIASQRGPNAGSQQDLRLEHIFVKAPANAPQADIDVAQKKAEGLLQQALASGANFERLAKNQSEADDAKKGGDLGFKSPASLPSDVVDAVSKLRPGEVNPTLIRVPDGFEIVRLVERRASQNPAASPKIVQTHVRHILLRVGEGKSESQARQQLIDIRRQIESGGDFEKFARTYSQDGSASQGGDLGWISPGETVPEFERAMNTLQDGQVSNPVRTEYGYHLIQVLGRRDAEGSVQQQMDIARQAIGQRKAEQAYSDWLRELRDSSYVQIKLPVAQ.

The signal sequence occupies residues 1 to 27 (MKKTLRFAAVASGLVASLITVAPSASA). 2 consecutive PpiC domains span residues 185–288 (QQDL…RLVE) and 301–399 (IVQT…QVLG).

Its subcellular location is the periplasm. The enzyme catalyses [protein]-peptidylproline (omega=180) = [protein]-peptidylproline (omega=0). Chaperone involved in the correct folding and assembly of outer membrane proteins. Recognizes specific patterns of aromatic residues and the orientation of their side chains, which are found more frequently in integral outer membrane proteins. May act in both early periplasmic and late outer membrane-associated steps of protein maturation. This chain is Chaperone SurA, found in Burkholderia pseudomallei (strain 1710b).